We begin with the raw amino-acid sequence, 443 residues long: MSKIIKVIGREIIDSRGYPTVEAEVHLLGGIIGRASSPSGISIGSREAHEVRDRDNSRFLGEGVTKAVKSINNKISKSLISKNAQKQKDIDQIMINLDGTKNKSNLGANAILAVSLANAKAASKIKNIPLYKHISEINNTPGIFSMPLPMINIINGGKHTNNNIDIQEFMIQPIGAKSIKQAIQMGSEIFHNLGKILNEKGMSTSIGDEGGYSPNLKSNSNAFVLIKEAVKRSKYHIGRDITFAIDCAASEFFEESTQSYYLKSENNFFSSYEFVLFLKKLTEEYPILSIEDGLHENDWEGFSMLTNYLGNKIQLVGDDLFTTNPKFLKYGIKKGIANSILIKPNQIGSLTETLEVIKIAKKYGYATIISHRSGETEDVTIADLSVGTSSGQIKTGSMSRSDRTAKYNRLIRIEEELGSNAIFHGKMEIKNQFIYSNNNLKNF.

Glutamine 167 provides a ligand contact to (2R)-2-phosphoglycerate. Glutamate 209 (proton donor) is an active-site residue. Aspartate 246, glutamate 291, and aspartate 318 together coordinate Mg(2+). Lysine 343, arginine 372, serine 373, and lysine 394 together coordinate (2R)-2-phosphoglycerate. The active-site Proton acceptor is the lysine 343.

The protein belongs to the enolase family. As to quaternary structure, component of the RNA degradosome, a multiprotein complex involved in RNA processing and mRNA degradation. Mg(2+) serves as cofactor.

It localises to the cytoplasm. The protein localises to the secreted. It is found in the cell surface. It carries out the reaction (2R)-2-phosphoglycerate = phosphoenolpyruvate + H2O. The protein operates within carbohydrate degradation; glycolysis; pyruvate from D-glyceraldehyde 3-phosphate: step 4/5. Its function is as follows. Catalyzes the reversible conversion of 2-phosphoglycerate (2-PG) into phosphoenolpyruvate (PEP). It is essential for the degradation of carbohydrates via glycolysis. This chain is Enolase, found in Wigglesworthia glossinidia brevipalpis.